A 175-amino-acid polypeptide reads, in one-letter code: MSYSKIPAGKDLPNDIYVAIEIPANHAPIKYEIDKDTDCLFVDRFMATPMFYPANYGFIPNTLADDGDPLDVLVVTPYPVTPGSVIRARPVGILHMTDDGGGDAKVIAVPHDKLSQLYVDVKEYTDLPALLLEQIKHFFENYKDLEKGKWVKIEGWGNADAARAEIMKSVEAFKG.

Residues lysine 30, arginine 44, and tyrosine 56 each contribute to the substrate site. 3 residues coordinate Mg(2+): aspartate 66, aspartate 71, and aspartate 103. Tyrosine 142 provides a ligand contact to substrate.

It belongs to the PPase family. Homohexamer. The cofactor is Mg(2+).

The protein localises to the cytoplasm. The catalysed reaction is diphosphate + H2O = 2 phosphate + H(+). Catalyzes the hydrolysis of inorganic pyrophosphate (PPi) forming two phosphate ions. The chain is Inorganic pyrophosphatase 1 from Pseudomonas syringae pv. tomato (strain ATCC BAA-871 / DC3000).